The primary structure comprises 451 residues: Trigger factor (451 aa).

A PPIase FKBP-type domain is found at 165 to 250 (DDKLTIDFEG…LRQIQVREAL (86 aa)).

This sequence belongs to the FKBP-type PPIase family. Tig subfamily.

Its subcellular location is the cytoplasm. The catalysed reaction is [protein]-peptidylproline (omega=180) = [protein]-peptidylproline (omega=0). Its function is as follows. Involved in protein export. Acts as a chaperone by maintaining the newly synthesized protein in an open conformation. Functions as a peptidyl-prolyl cis-trans isomerase. The chain is Trigger factor (tig) from Helicobacter pylori (strain J99 / ATCC 700824) (Campylobacter pylori J99).